Here is a 435-residue protein sequence, read N- to C-terminus: MVYFPKIEKIKYEGTNTKNMYAFRHYNSEEIIMGKTMKEHLRFAVAYWHTMTQDGSDPFGKAVNKRSWLGESPMETAKKRVIAFFEILEKLDVEYFCFHDIDIAPEGNSLKEFFSNIDEITDLIKEKMDETGIKLLWNTANMFSNPRYVNGAASTNNANVYAIAAAQVKKGLDVSKKLGGENYVFWGGREGYETLLNTDMKFEQDNIARLFKMAIFYGEKIGHKPQFLIEPKPKEPSKHQYDFDAATTMAFILKYGLEKDFKLNLEANHATLAGHTFEHELNVARNYGALGSIDANQGDVLLGWDTDEFPTNVYDVTLAMYEILENGGIEPGGINFDSKVRRSSFEMEDLLLAHIAGMDTFARGLKSAMKLKEDRFFEDLKEQRYSSFKKGIGAKIISGKENLESLTNYALKNDEPIIESSHIEYVKNILNDYLY.

Catalysis depends on residues His99 and Asp102. Mg(2+)-binding residues include Glu230, Glu266, His269, Asp294, Asp305, Asp307, and Asp337.

Belongs to the xylose isomerase family. As to quaternary structure, homotetramer. The cofactor is Mg(2+).

It is found in the cytoplasm. It carries out the reaction alpha-D-xylose = alpha-D-xylulofuranose. The polypeptide is Xylose isomerase (Enterococcus faecalis (strain ATCC 700802 / V583)).